The following is a 160-amino-acid chain: Transcriptional repressor NrdR (160 aa).

The segment at 3-34 (CPRCHHNNSRVIDSRQADDGRAIRRRRECENC) is a zinc-finger region. Residues 49 to 139 (LLVIKKNGDR…VYRQFKDMSV (91 aa)) form the ATP-cone domain.

The protein belongs to the NrdR family. Zn(2+) serves as cofactor.

Negatively regulates transcription of bacterial ribonucleotide reductase nrd genes and operons by binding to NrdR-boxes. This Enterococcus faecalis (strain ATCC 700802 / V583) protein is Transcriptional repressor NrdR.